We begin with the raw amino-acid sequence, 326 residues long: Cyclin-dependent kinase 1 (326 aa).

A Protein kinase domain is found at 16-306 (FTKLEKIGEG…SKKALHHPYF (291 aa)). ATP-binding positions include 22 to 30 (IGEGTYGVV) and K45. Residue D140 is the Proton acceptor of the active site.

This sequence belongs to the protein kinase superfamily. CMGC Ser/Thr protein kinase family. CDC2/CDKX subfamily. Forms a stable but non-covalent complex with a regulatory subunit and with a cyclin. Interacts with cks-1.

It is found in the nucleus. It localises to the cytoplasm. Its subcellular location is the cytoskeleton. The protein localises to the microtubule organizing center. The protein resides in the centrosome. The catalysed reaction is L-seryl-[protein] + ATP = O-phospho-L-seryl-[protein] + ADP + H(+). It catalyses the reaction L-threonyl-[protein] + ATP = O-phospho-L-threonyl-[protein] + ADP + H(+). It carries out the reaction [DNA-directed RNA polymerase] + ATP = phospho-[DNA-directed RNA polymerase] + ADP + H(+). Its activity is regulated as follows. Phosphorylation both activates and inactivates the enzyme depending on the site of phosphorylation. Functionally, plays a key role in the control of the eukaryotic cell cycle. Required for entry into S-phase and mitosis. Acts as a component of the kinase complex that phosphorylates the repetitive C-terminus of RNA polymerase II. May function in concert with npp-16 to arrest prophase blastomeres in response to anoxia. This chain is Cyclin-dependent kinase 1, found in Caenorhabditis briggsae.